Reading from the N-terminus, the 66-residue chain is Large ribosomal subunit protein uL29 (66 aa).

It belongs to the universal ribosomal protein uL29 family.

The protein is Large ribosomal subunit protein uL29 of Bacillus licheniformis (strain ATCC 14580 / DSM 13 / JCM 2505 / CCUG 7422 / NBRC 12200 / NCIMB 9375 / NCTC 10341 / NRRL NRS-1264 / Gibson 46).